Reading from the N-terminus, the 246-residue chain is Indole-3-glycerol phosphate synthase (246 aa).

Belongs to the TrpC family.

The enzyme catalyses 1-(2-carboxyphenylamino)-1-deoxy-D-ribulose 5-phosphate + H(+) = (1S,2R)-1-C-(indol-3-yl)glycerol 3-phosphate + CO2 + H2O. The protein operates within amino-acid biosynthesis; L-tryptophan biosynthesis; L-tryptophan from chorismate: step 4/5. In Sulfurisphaera tokodaii (strain DSM 16993 / JCM 10545 / NBRC 100140 / 7) (Sulfolobus tokodaii), this protein is Indole-3-glycerol phosphate synthase.